The chain runs to 934 residues: Palmitoyltransferase ZDHHC8 (934 aa).

The Cytoplasmic portion of the chain corresponds to 1-9; sequence MPKCDVKTR. Residues 10 to 30 form a helical membrane-spanning segment; it reads YIPATFAWIVLLLTTFLFFFY. Residues 31–47 lie on the Extracellular side of the membrane; the sequence is PCQFYVKSHPWVLAYQG. The helical transmembrane segment at 48-68 threads the bilayer; sequence VITFFVLANFTLATFMDPGII. Residues 69-142 lie on the Cytoplasmic side of the membrane; that stretch reads PKASPDEDCE…NNCIGRRNYR (74 aa). One can recognise a DHHC domain in the interval 99-149; the sequence is KWCVTCKFYRPPRCSHCSVCNHCIETFDHHCPWVNNCIGRRNYRFFFFFLV. C129 functions as the S-palmitoyl cysteine intermediate in the catalytic mechanism. A helical membrane pass occupies residues 143-163; the sequence is FFFFFLVSLSIHMLSIFSLCL. At 164–177 the chain is on the extracellular side; the sequence is VYVLKIMPNIKDTA. A helical membrane pass occupies residues 178-198; sequence PIVAIILMGLVTILAIPIFGL. The Cytoplasmic portion of the chain corresponds to 199-934; that stretch reads TGFHMVLVSR…IYDMNYEISV (736 aa). Disordered stretches follow at residues 336 to 440, 506 to 525, 669 to 705, 751 to 780, 835 to 862, and 881 to 934; these read NGYN…GYTS, MASPVRRSNPGTPTQPRRPD, QRGVYMWKDTSPGFTNNAGQQQQQQQQAQQVVSSGIG, QQQQQQQQAAAAAAASYHRSNPTSPTTMPQ, PNPMGNQGGGNLQTQPSPQIKRKQTPTR, and LEQQ…EISV. Composition is skewed to polar residues over residues 337–349 and 381–394; these read GYNQRSGSTTLYS and RHNSSSFYLPQVSD. Residues 397-411 show a composition bias toward gly residues; the sequence is GLNGSVSTGGGGGGD. Residues 415 to 429 are compositionally biased toward basic residues; sequence HMRLYHPRHSPHARP. 2 stretches are compositionally biased toward low complexity: residues 688–705 and 751–765; these read QQQQQQQQAQQVVSSGIG and QQQQQQQQAAAAAAA. The segment covering 768–780 has biased composition (polar residues); it reads HRSNPTSPTTMPQ. The segment covering 910–919 has biased composition (polar residues); it reads MQSNASNSGT.

The protein belongs to the DHHC palmitoyltransferase family. ERF2/ZDHHC9 subfamily.

Its subcellular location is the golgi apparatus membrane. The protein localises to the cell membrane. It catalyses the reaction L-cysteinyl-[protein] + hexadecanoyl-CoA = S-hexadecanoyl-L-cysteinyl-[protein] + CoA. Functionally, palmitoyltransferase that catalyzes the addition of palmitate onto various protein substrates and therefore functions in several unrelated biological processes. Regulates tissue growth possibly by regulating Ras64B protein stability. May regulate CG34450 mRNA levels. The protein is Palmitoyltransferase ZDHHC8 of Drosophila melanogaster (Fruit fly).